The following is a 964-amino-acid chain: MDAPSAGYAFEYLIETLNDSSHKKFFNVPRLGGTKYDVLPYSIRVLLEAAVRNCDGFLMKKEDVMNILDWKTKQSNVEVPFFPGRVLLQDFTGIPAMVDFAAMREAVKTLGGDPKKVHPACPTDLTVDHSLQIDFNKCAIQNAPNPGGGDLQKAGKLSPLRVQPKKLPCRGQTACRGSCDSGDLGRNSGKFSSQIENTPILCPFHLQPVPEPETVLKNQEVEFGRNRERLQFFKWSSRVFKNVAVIPPGTGMAHQVNLEYLSRVVFEEKDLLFPDSVVGTDSHITMVNGLGILGWGVGGIETEAVMLGLPVSLTLPEVVGCELTGSSNPFVTSIDVVLGITKHLRQIGVAGKFVEFFGSGVSQLSIVDRTTIANMCPEYGAILSFFPVDNVTLKHLEYTGFNKAKLKSMETYLKAVKLFRNDQDNSGEPEYSQVIQINLNSIVPSVSGPKRPQDRVAVTDMKSDFQACLNEKVGFKGFQIAAEKQNDTVSIHYEGSEYKLSHGSVVIAAVISCTNNCNPSVMLAAGLLAKKAVEAGLRVKPYIRTSLSPGSGMVTHYLSSSGVLPYLSKLGFEIVGYGCSTCVGNTAPLSEAVLNAVKQGDLVTCGVLSGNKNFEGRLCDCVRANYLASPPLVVAYAIAGTVNIDFRTEPLGTDPTGKNIYLHDIWPSREEVHQIEEEHVVLSMFKALKEKIEMGNKRWNSLEAPDSVLFPWDLKSTYIRCPSFFDKLTKEPVALQPIENAHVLLYLGDSVTTDHISPAGSIARSSAAAKYLTNRGLTPREFNSYGARRGNDAVMTRGTFANIKLFNKFIGKPAPKTIHFPSGQTLDVFEAAELYQKEGIPLIILAGKKYGSGNSRDWAAKGPYLLGVKAVLAESYEKIHKDHLIGIGIAPLQFLPGENADSLGLSGRETFSLTFPEELSPGVTLNIKTSTGKIFSVIASFENDVEIILYKHGGLLNFVARKFS.

[4Fe-4S] cluster is bound by residues cysteine 513, cysteine 579, and cysteine 582.

Belongs to the aconitase/IPM isomerase family. Interacts with RBCK1 only in iron-rich conditions. Interacts (when associated with the 4Fe-4S) with FBXL5. Interacts with CIAO1 and CIAO2A. Requires [4Fe-4S] cluster as cofactor. In terms of processing, ubiquitinated and degraded by the proteasome in presence of high level of iron and oxygen. Ubiquitinated by a SCF complex containing FBXL5. Upon iron and oxygen depletion FBXL5 is degraded, preventing ubiquitination and allowing its RNA-binding activity.

It localises to the cytoplasm. Its function is as follows. RNA-binding protein that binds to iron-responsive elements (IRES), which are stem-loop structures found in the 5'-UTR of ferritin, and delta aminolevulinic acid synthase mRNAs, and in the 3'-UTR of transferrin receptor mRNA. Binding to the IRE element in ferritin results in the repression of its mRNA translation. Binding of the protein to the transferrin receptor mRNA inhibits the degradation of this otherwise rapidly degraded mRNA. The polypeptide is Iron-responsive element-binding protein 2 (IREB2) (Sus scrofa (Pig)).